Consider the following 304-residue polypeptide: Release factor glutamine methyltransferase (304 aa).

The S-adenosyl-L-methionine site is built by Asp-144 and Asn-188. Substrate is bound at residue 188-191; the sequence is NPPY.

Belongs to the protein N5-glutamine methyltransferase family. PrmC subfamily.

The enzyme catalyses L-glutaminyl-[peptide chain release factor] + S-adenosyl-L-methionine = N(5)-methyl-L-glutaminyl-[peptide chain release factor] + S-adenosyl-L-homocysteine + H(+). In terms of biological role, methylates the class 1 translation termination release factors RF1/PrfA and RF2/PrfB on the glutamine residue of the universally conserved GGQ motif. This chain is Release factor glutamine methyltransferase, found in Mycobacterium tuberculosis (strain CDC 1551 / Oshkosh).